The sequence spans 211 residues: Probable GTP-binding protein EngB (211 aa).

The EngB-type G domain occupies Leu21–Glu205. Residues Gly29–Ser36, Gly54–Lys58, Asp71–Gly74, Asn151–Asp154, and Ile184–Ala186 contribute to the GTP site. Mg(2+) is bound by residues Ser36 and Thr56.

The protein belongs to the TRAFAC class TrmE-Era-EngA-EngB-Septin-like GTPase superfamily. EngB GTPase family. It depends on Mg(2+) as a cofactor.

Its function is as follows. Necessary for normal cell division and for the maintenance of normal septation. The protein is Probable GTP-binding protein EngB of Pyrococcus abyssi (strain GE5 / Orsay).